We begin with the raw amino-acid sequence, 437 residues long: Adenylosuccinate synthetase (437 aa).

GTP contacts are provided by residues 12–18 (GDEGKGK) and 40–42 (GHT). The Proton acceptor role is filled by Asp-13. 2 residues coordinate Mg(2+): Asp-13 and Gly-40. IMP-binding positions include 13–16 (DEGK), 38–41 (NAGH), Thr-128, Arg-142, Gln-223, Thr-238, and Arg-302. The active-site Proton donor is the His-41. 298–304 (TTTGRRR) is a substrate binding site. Residues Arg-304, 330 to 332 (KLD), and 412 to 414 (SLG) contribute to the GTP site.

This sequence belongs to the adenylosuccinate synthetase family. As to quaternary structure, homodimer. Mg(2+) is required as a cofactor.

Its subcellular location is the cytoplasm. The catalysed reaction is IMP + L-aspartate + GTP = N(6)-(1,2-dicarboxyethyl)-AMP + GDP + phosphate + 2 H(+). The protein operates within purine metabolism; AMP biosynthesis via de novo pathway; AMP from IMP: step 1/2. In terms of biological role, plays an important role in the de novo pathway of purine nucleotide biosynthesis. Catalyzes the first committed step in the biosynthesis of AMP from IMP. The chain is Adenylosuccinate synthetase from Parasynechococcus marenigrum (strain WH8102).